The following is a 185-amino-acid chain: Large ribosomal subunit protein uL5 (185 aa).

Belongs to the universal ribosomal protein uL5 family. In terms of assembly, part of the 50S ribosomal subunit; part of the 5S rRNA/L5/L18/L25 subcomplex. Contacts the 5S rRNA and the P site tRNA. Forms a bridge to the 30S subunit in the 70S ribosome.

This is one of the proteins that bind and probably mediate the attachment of the 5S RNA into the large ribosomal subunit, where it forms part of the central protuberance. In the 70S ribosome it contacts protein S13 of the 30S subunit (bridge B1b), connecting the 2 subunits; this bridge is implicated in subunit movement. Contacts the P site tRNA; the 5S rRNA and some of its associated proteins might help stabilize positioning of ribosome-bound tRNAs. The protein is Large ribosomal subunit protein uL5 of Streptomyces avermitilis (strain ATCC 31267 / DSM 46492 / JCM 5070 / NBRC 14893 / NCIMB 12804 / NRRL 8165 / MA-4680).